A 304-amino-acid polypeptide reads, in one-letter code: HTH-type transcriptional activator CmpR (304 aa).

The region spanning 1–61 (MKNATLHQFE…EQIGRKIYLT (61 aa)) is the HTH lysR-type domain. A DNA-binding region (H-T-H motif) is located at residues 21–40 (FTKAAEELFLTQPTVSQQMK).

The protein belongs to the LysR transcriptional regulatory family.

Its subcellular location is the cytoplasm. In terms of biological role, activates transcription of the cmpABCD operon under carbon dioxide-limited conditions. Specifically binds to the cmpR-cmpA intergenic region. In Synechocystis sp. (strain ATCC 27184 / PCC 6803 / Kazusa), this protein is HTH-type transcriptional activator CmpR (cmpR).